Consider the following 179-residue polypeptide: Large ribosomal subunit protein uL5 (179 aa).

This sequence belongs to the universal ribosomal protein uL5 family. Part of the 50S ribosomal subunit; part of the 5S rRNA/L5/L18/L25 subcomplex. Contacts the 5S rRNA and the P site tRNA. Forms a bridge to the 30S subunit in the 70S ribosome.

In terms of biological role, this is one of the proteins that bind and probably mediate the attachment of the 5S RNA into the large ribosomal subunit, where it forms part of the central protuberance. In the 70S ribosome it contacts protein S13 of the 30S subunit (bridge B1b), connecting the 2 subunits; this bridge is implicated in subunit movement. Contacts the P site tRNA; the 5S rRNA and some of its associated proteins might help stabilize positioning of ribosome-bound tRNAs. In Tolumonas auensis (strain DSM 9187 / NBRC 110442 / TA 4), this protein is Large ribosomal subunit protein uL5.